Consider the following 364-residue polypeptide: Methylthioribose-1-phosphate isomerase (364 aa).

Residues 51-53, arginine 88, and glutamine 199 contribute to the substrate site; that span reads RGA. Aspartate 240 acts as the Proton donor in catalysis. 250–251 contributes to the substrate binding site; the sequence is NK.

The protein belongs to the eIF-2B alpha/beta/delta subunits family. MtnA subfamily.

It carries out the reaction 5-(methylsulfanyl)-alpha-D-ribose 1-phosphate = 5-(methylsulfanyl)-D-ribulose 1-phosphate. It participates in amino-acid biosynthesis; L-methionine biosynthesis via salvage pathway; L-methionine from S-methyl-5-thio-alpha-D-ribose 1-phosphate: step 1/6. Catalyzes the interconversion of methylthioribose-1-phosphate (MTR-1-P) into methylthioribulose-1-phosphate (MTRu-1-P). This Cereibacter sphaeroides (strain KD131 / KCTC 12085) (Rhodobacter sphaeroides) protein is Methylthioribose-1-phosphate isomerase.